Consider the following 228-residue polypeptide: PKHD-type hydroxylase XC_1340 (228 aa).

The 103-residue stretch at 78–180 folds into the Fe2OG dioxygenase domain; it reads RIYPPLFNRY…RVASFFWIQS (103 aa). Fe cation contacts are provided by His96, Asp98, and His161. Arg171 contributes to the 2-oxoglutarate binding site.

Fe(2+) is required as a cofactor. L-ascorbate serves as cofactor.

This Xanthomonas campestris pv. campestris (strain 8004) protein is PKHD-type hydroxylase XC_1340.